We begin with the raw amino-acid sequence, 201 residues long: Putative 3-methyladenine DNA glycosylase (201 aa).

It belongs to the DNA glycosylase MPG family.

The sequence is that of Putative 3-methyladenine DNA glycosylase from Rhodopseudomonas palustris (strain HaA2).